A 334-amino-acid chain; its full sequence is Probable allantoicase (334 aa).

It belongs to the allantoicase family.

It catalyses the reaction allantoate + H2O = (S)-ureidoglycolate + urea. The protein operates within nitrogen metabolism; (S)-allantoin degradation; (S)-ureidoglycolate from allantoate (aminidohydrolase route): step 1/1. This Acinetobacter baylyi (strain ATCC 33305 / BD413 / ADP1) protein is Probable allantoicase.